A 225-amino-acid chain; its full sequence is Biosynthetic peptidoglycan transglycosylase (225 aa).

Residues 8–28 (VLLIFIGAILLIQLWIFSSLV) form a helical membrane-spanning segment.

This sequence belongs to the glycosyltransferase 51 family.

It is found in the cell inner membrane. The catalysed reaction is [GlcNAc-(1-&gt;4)-Mur2Ac(oyl-L-Ala-gamma-D-Glu-L-Lys-D-Ala-D-Ala)](n)-di-trans,octa-cis-undecaprenyl diphosphate + beta-D-GlcNAc-(1-&gt;4)-Mur2Ac(oyl-L-Ala-gamma-D-Glu-L-Lys-D-Ala-D-Ala)-di-trans,octa-cis-undecaprenyl diphosphate = [GlcNAc-(1-&gt;4)-Mur2Ac(oyl-L-Ala-gamma-D-Glu-L-Lys-D-Ala-D-Ala)](n+1)-di-trans,octa-cis-undecaprenyl diphosphate + di-trans,octa-cis-undecaprenyl diphosphate + H(+). The protein operates within cell wall biogenesis; peptidoglycan biosynthesis. Peptidoglycan polymerase that catalyzes glycan chain elongation from lipid-linked precursors. The sequence is that of Biosynthetic peptidoglycan transglycosylase from Acinetobacter baumannii (strain AB307-0294).